A 140-amino-acid chain; its full sequence is 6,7-dimethyl-8-ribityllumazine synthase (140 aa).

5-amino-6-(D-ribitylamino)uracil contacts are provided by residues F11, A42–E44, and V66–I68. E71–T72 provides a ligand contact to (2S)-2-hydroxy-3-oxobutyl phosphate. Catalysis depends on H74, which acts as the Proton donor. N98 serves as a coordination point for 5-amino-6-(D-ribitylamino)uracil. (2S)-2-hydroxy-3-oxobutyl phosphate is bound at residue R112.

This sequence belongs to the DMRL synthase family.

It catalyses the reaction (2S)-2-hydroxy-3-oxobutyl phosphate + 5-amino-6-(D-ribitylamino)uracil = 6,7-dimethyl-8-(1-D-ribityl)lumazine + phosphate + 2 H2O + H(+). The protein operates within cofactor biosynthesis; riboflavin biosynthesis; riboflavin from 2-hydroxy-3-oxobutyl phosphate and 5-amino-6-(D-ribitylamino)uracil: step 1/2. Catalyzes the formation of 6,7-dimethyl-8-ribityllumazine by condensation of 5-amino-6-(D-ribitylamino)uracil with 3,4-dihydroxy-2-butanone 4-phosphate. This is the penultimate step in the biosynthesis of riboflavin. This chain is 6,7-dimethyl-8-ribityllumazine synthase, found in Erythrobacter litoralis (strain HTCC2594).